The primary structure comprises 920 residues: Nitrate reductase [NADH] (920 aa).

The tract at residues methionine 1–alanine 69 is disordered. A compositionally biased stretch (acidic residues) spans aspartate 60–alanine 69. Cysteine 185 contributes to the Mo-molybdopterin binding site. Positions serine 534 to isoleucine 609 constitute a Cytochrome b5 heme-binding domain. The heme site is built by histidine 569 and histidine 592. One can recognise an FAD-binding FR-type domain in the interval arginine 663–methionine 775. FAD-binding positions include arginine 715–threonine 718, leucine 732–tyrosine 736, phenylalanine 737, phenylalanine 744, leucine 749–serine 751, and threonine 802.

This sequence belongs to the nitrate reductase family. Homodimer. The cofactor is FAD. Heme serves as cofactor. Requires Mo-molybdopterin as cofactor. In terms of tissue distribution, in cortical cells of roots grown at low nitrate concentrations, in vascular tissues of roots at high nitrate concentrations and in root apex under both conditions.

The enzyme catalyses nitrite + NAD(+) + H2O = nitrate + NADH + H(+). Its function is as follows. Nitrate reductase is a key enzyme involved in the first step of nitrate assimilation in plants, fungi and bacteria. This Cichorium intybus (Chicory) protein is Nitrate reductase [NADH] (NIA).